A 119-amino-acid chain; its full sequence is Acidic phospholipase A2 natratoxin (119 aa).

Disulfide bonds link Cys-11-Cys-71, Cys-26-Cys-118, Cys-28-Cys-44, Cys-43-Cys-99, Cys-50-Cys-92, Cys-60-Cys-85, and Cys-78-Cys-90. Tyr-27, Gly-29, and Gly-31 together coordinate Ca(2+). Residue His-47 is part of the active site. A Ca(2+)-binding site is contributed by Asp-48. Asp-93 is a catalytic residue.

Belongs to the phospholipase A2 family. Group I subfamily. D49 sub-subfamily. It depends on Ca(2+) as a cofactor. In terms of tissue distribution, expressed by the venom gland.

It is found in the secreted. The enzyme catalyses a 1,2-diacyl-sn-glycero-3-phosphocholine + H2O = a 1-acyl-sn-glycero-3-phosphocholine + a fatty acid + H(+). In terms of biological role, snake venom phospholipase A2 (PLA2) that has an effectively inhibitory effect on A-type K(+) currents (Kv/KCN) in acutely dissociated rat dorsal root ganglion (DRG) neurons. This inhibitory effect is independent of its enzymatic activity. PLA2 catalyzes the calcium-dependent hydrolysis of the 2-acyl groups in 3-sn-phosphoglycerides. This is Acidic phospholipase A2 natratoxin from Naja atra (Chinese cobra).